Consider the following 250-residue polypeptide: Cell division protein ZapD (250 aa).

It belongs to the ZapD family. In terms of assembly, interacts with FtsZ.

The protein localises to the cytoplasm. Functionally, cell division factor that enhances FtsZ-ring assembly. Directly interacts with FtsZ and promotes bundling of FtsZ protofilaments, with a reduction in FtsZ GTPase activity. The sequence is that of Cell division protein ZapD from Pectobacterium atrosepticum (strain SCRI 1043 / ATCC BAA-672) (Erwinia carotovora subsp. atroseptica).